The chain runs to 108 residues: UPF0060 membrane protein YnfA (108 aa).

Residues 1-5 lie on the Periplasmic side of the membrane; the sequence is MLKTT. A helical membrane pass occupies residues 6–26; sequence LLFFVTALCEIIGCFLPWLWL. At 27–30 the chain is on the cytoplasmic side; it reads KRGA. The chain crosses the membrane as a helical span at residues 31-51; that stretch reads SMWWLLPAAASLALFVWLLTL. At 52–60 the chain is on the periplasmic side; it reads HPAASGRVY. A helical membrane pass occupies residues 61–81; the sequence is AAYGGVYVCTALLWLRVVDGV. Residues 82 to 84 lie on the Cytoplasmic side of the membrane; that stretch reads RLT. Residues 85 to 105 form a helical membrane-spanning segment; that stretch reads VYDWCGALIALCGMLIIVVGW. Residues 106-108 lie on the Periplasmic side of the membrane; sequence GRT.

Belongs to the UPF0060 family.

The protein resides in the cell inner membrane. The protein is UPF0060 membrane protein YnfA of Salmonella schwarzengrund (strain CVM19633).